Consider the following 272-residue polypeptide: Endoplasmic reticulum resident protein 27 (272 aa).

An N-terminal signal peptide occupies residues M1–A25. The 114-residue stretch at E38 to A151 folds into the Thioredoxin domain. An N-linked (GlcNAc...) asparagine glycan is attached at N99. The segment at D229–D232 is PDIA3-binding site. The short motif at K269–L272 is the Prevents secretion from ER element.

This sequence belongs to the protein disulfide isomerase family. Interacts with PDIA3.

It is found in the endoplasmic reticulum lumen. In terms of biological role, specifically binds unfolded proteins and may recruit protein disulfide isomerase PDIA3 to unfolded substrates. Binds protein substrates via a hydrophobic pocket in the C-terminal domain. May play a role in the unfolded stress response. This Bos taurus (Bovine) protein is Endoplasmic reticulum resident protein 27 (ERP27).